Here is a 159-residue protein sequence, read N- to C-terminus: NAD(P)H-quinone oxidoreductase subunit J, chloroplastic (159 aa).

Belongs to the complex I 30 kDa subunit family. As to quaternary structure, NDH is composed of at least 16 different subunits, 5 of which are encoded in the nucleus. Leaves.

Its subcellular location is the plastid. It is found in the chloroplast thylakoid membrane. It catalyses the reaction a plastoquinone + NADH + (n+1) H(+)(in) = a plastoquinol + NAD(+) + n H(+)(out). The catalysed reaction is a plastoquinone + NADPH + (n+1) H(+)(in) = a plastoquinol + NADP(+) + n H(+)(out). NDH shuttles electrons from NAD(P)H:plastoquinone, via FMN and iron-sulfur (Fe-S) centers, to quinones in the photosynthetic chain and possibly in a chloroplast respiratory chain. The immediate electron acceptor for the enzyme in this species is believed to be plastoquinone. Couples the redox reaction to proton translocation, and thus conserves the redox energy in a proton gradient. The polypeptide is NAD(P)H-quinone oxidoreductase subunit J, chloroplastic (Zea mays (Maize)).